A 316-amino-acid polypeptide reads, in one-letter code: Ribosomal RNA small subunit methyltransferase A (316 aa).

S-adenosyl-L-methionine contacts are provided by Asn33, Val35, Gly60, Glu81, Asp110, and Asn133.

It belongs to the class I-like SAM-binding methyltransferase superfamily. rRNA adenine N(6)-methyltransferase family. RsmA subfamily.

It localises to the cytoplasm. The catalysed reaction is adenosine(1518)/adenosine(1519) in 16S rRNA + 4 S-adenosyl-L-methionine = N(6)-dimethyladenosine(1518)/N(6)-dimethyladenosine(1519) in 16S rRNA + 4 S-adenosyl-L-homocysteine + 4 H(+). Its function is as follows. Specifically dimethylates two adjacent adenosines (A1518 and A1519) in the loop of a conserved hairpin near the 3'-end of 16S rRNA in the 30S particle. May play a critical role in biogenesis of 30S subunits. This is Ribosomal RNA small subunit methyltransferase A from Corynebacterium jeikeium (strain K411).